A 567-amino-acid chain; its full sequence is Ribulokinase (567 aa).

Belongs to the ribulokinase family.

It catalyses the reaction D-ribulose + ATP = D-ribulose 5-phosphate + ADP + H(+). The catalysed reaction is L-ribulose + ATP = L-ribulose 5-phosphate + ADP + H(+). The protein operates within carbohydrate degradation; L-arabinose degradation via L-ribulose; D-xylulose 5-phosphate from L-arabinose (bacterial route): step 2/3. The protein is Ribulokinase of Vibrio parahaemolyticus serotype O3:K6 (strain RIMD 2210633).